Reading from the N-terminus, the 255-residue chain is Pimeloyl-[acyl-carrier protein] methyl ester esterase (255 aa).

Residues W18, 78–79, and 139–143 contribute to the substrate site; these read SL and FLALD. The active-site Nucleophile is S78. Residues D203 and H233 contribute to the active site. Residue H233 participates in substrate binding.

The protein belongs to the AB hydrolase superfamily. Carboxylesterase BioH family. Monomer.

It localises to the cytoplasm. It carries out the reaction 6-carboxyhexanoyl-[ACP] methyl ester + H2O = 6-carboxyhexanoyl-[ACP] + methanol + H(+). The protein operates within cofactor biosynthesis; biotin biosynthesis. Its function is as follows. The physiological role of BioH is to remove the methyl group introduced by BioC when the pimeloyl moiety is complete. It allows to synthesize pimeloyl-ACP via the fatty acid synthetic pathway through the hydrolysis of the ester bonds of pimeloyl-ACP esters. This Xylella fastidiosa (strain 9a5c) protein is Pimeloyl-[acyl-carrier protein] methyl ester esterase.